The chain runs to 302 residues: Glutaminase (302 aa).

Substrate contacts are provided by serine 61, asparagine 111, glutamate 155, asparagine 162, tyrosine 186, tyrosine 238, and valine 256.

The protein belongs to the glutaminase family. In terms of assembly, homotetramer.

It carries out the reaction L-glutamine + H2O = L-glutamate + NH4(+). The chain is Glutaminase from Ectopseudomonas mendocina (strain ymp) (Pseudomonas mendocina).